The sequence spans 273 residues: Chlorophyll a-b binding protein 8, chloroplastic (273 aa).

A chloroplast-targeting transit peptide spans 1 to 32; sequence MATQALISSSSISTSAEAARQIIGSRISQSVT. R33 is subject to N2-acetylarginine. W56 contributes to the chlorophyll b binding site. Residues F76, S82, and E100 each coordinate chlorophyll a. R105 lines the chlorophyll b pocket. A helical transmembrane segment spans residues 106-126; sequence FAMLGAAGAIAPEILGKAGLI. Residues I140, E167, and R170 each coordinate chlorophyll b. Positions 224, 225, 228, 230, 242, and 257 each coordinate chlorophyll a. Residues 231-251 form a helical membrane-spanning segment; sequence LAMLAILGYFIQALVTGVGPY.

It belongs to the light-harvesting chlorophyll a/b-binding (LHC) protein family. As to quaternary structure, the LHC complex consists of chlorophyll a-b binding proteins. The cofactor is Binds at least 14 chlorophylls (8 Chl-a and 6 Chl-b) and carotenoids such as lutein and neoxanthin.. Photoregulated by reversible phosphorylation of its threonine residues.

The protein localises to the plastid. Its subcellular location is the chloroplast thylakoid membrane. Its function is as follows. The light-harvesting complex (LHC) functions as a light receptor, it captures and delivers excitation energy to photosystems with which it is closely associated. This Solanum lycopersicum (Tomato) protein is Chlorophyll a-b binding protein 8, chloroplastic (CAB8).